Here is a 22-residue protein sequence, read N- to C-terminus: CVQQNKKSRSARDMXXSXDALE.

Positions 1–22 are disordered; sequence CVQQNKKSRSARDMXXSXDALE. Residues 13 to 22 show a composition bias toward low complexity; it reads DMXXSXDALE.

Belongs to the bacterial ribosomal protein bL32 family.

This chain is Large ribosomal subunit protein bL32 (rpmF), found in Ectopseudomonas mendocina (Pseudomonas mendocina).